Here is a 116-residue protein sequence, read N- to C-terminus: MKYFVVALTLAVAFVCIEECKTVEIGYAVSEDFDQNEIDNDEARQAFKTFTPDWNKIRNDAKRMQDNLEQMKKKFNLNLEEARQAFQTFKPDWNKIRYDAMKMQTSLGQMKKRFNL.

The signal sequence occupies residues Met-1–Thr-22. Propeptides lie at residues Val-23–Arg-44 and Glu-80–Arg-83. 2 short sequence motifs (processing quadruplet motif) span residues Asp-41–Arg-44 and Glu-80–Arg-83. A Pyrrolidone carboxylic acid modification is found at Gln-84.

It belongs to the cationic peptide 03 (latarcin) family. 06 subfamily. In terms of processing, cleavage of the propeptide depends on the processing quadruplet motif (XXXR, with at least one of X being E). As to expression, expressed by the venom gland.

It localises to the secreted. Its function is as follows. Does not have antimicrobial activity against Gram-positive bacteria (A.globiformis VKM Ac-1112 (MIC&gt;70 uM) and B.subtilis VKM B-501 (MIC&gt;70 uM)), Gram-negative bacteria (E.coli DH5-alpha (MIC&gt;70 uM), E.coli MH1 (MIC&gt;70 uM) and P.aeruginosa PAO1 (MIC&gt;70 uM)), yeast (P.pastoris GS115 (MIC&gt;70 uM) or S.cerevisiae Y190 (MIC&gt;70 uM)). Does not have hemolytic activity against rabbit erythrocytes. However, it causes some conductance changes in planar bilayer membranes, without membrane rupture, suggesting a cytolytic function on other biological targets. It causes paralysis, but is not lethal when injected into insect larvae. This is M-zodatoxin-Lt6a/c from Lachesana tarabaevi (Spider).